The following is a 110-amino-acid chain: Small ribosomal subunit protein bS16 (110 aa).

Positions 84–110 (KRTARNNPEKAVPRKERKAQAEAAAKS) are disordered. A compositionally biased stretch (basic and acidic residues) spans 90–103 (NPEKAVPRKERKAQ).

It belongs to the bacterial ribosomal protein bS16 family.

The sequence is that of Small ribosomal subunit protein bS16 from Nitrobacter hamburgensis (strain DSM 10229 / NCIMB 13809 / X14).